The chain runs to 22 residues: Proline-rich peptide (22 aa).

The tract at residues 1 to 22 is disordered; that stretch reads FVDRNRIPRSNNGPKIPIISNP.

Its subcellular location is the secreted. Antibacterial peptide active against Gram-positive bacterium M.luteus and Gram-negative bacterium E.coli. The polypeptide is Proline-rich peptide (Calliphora vicina (Blue blowfly)).